Here is a 461-residue protein sequence, read N- to C-terminus: Probable ribonuclease FAU-1 (461 aa).

Positions 89–158 (GAVFYGEVTE…ARPSLATALR (70 aa)) constitute an S1 motif domain.

This sequence belongs to the FAU-1 family.

In terms of biological role, probable RNase involved in rRNA stability through maturation and/or degradation of precursor rRNAs. Binds to RNA in loop regions with AU-rich sequences. In Natronomonas pharaonis (strain ATCC 35678 / DSM 2160 / CIP 103997 / JCM 8858 / NBRC 14720 / NCIMB 2260 / Gabara) (Halobacterium pharaonis), this protein is Probable ribonuclease FAU-1.